The chain runs to 331 residues: 5-dehydro-2-deoxygluconokinase (331 aa).

It belongs to the carbohydrate kinase PfkB family.

It catalyses the reaction 5-dehydro-2-deoxy-D-gluconate + ATP = 6-phospho-5-dehydro-2-deoxy-D-gluconate + ADP + H(+). The protein operates within polyol metabolism; myo-inositol degradation into acetyl-CoA; acetyl-CoA from myo-inositol: step 5/7. Catalyzes the phosphorylation of 5-dehydro-2-deoxy-D-gluconate (2-deoxy-5-keto-D-gluconate or DKG) to 6-phospho-5-dehydro-2-deoxy-D-gluconate (DKGP). This chain is 5-dehydro-2-deoxygluconokinase, found in Photobacterium profundum (strain SS9).